The chain runs to 155 residues: Myosin light chain alkali (155 aa).

2 consecutive EF-hand domains span residues Arg-7 to Asn-41 and Gly-80 to Ser-115.

As to quaternary structure, myosin is a hexamer of 2 heavy chains and 4 light chains. Indirect flight muscle isoform is found only in the indirect flight muscles. The larval and adult isoform is present in the larval and adult musculature.

The polypeptide is Myosin light chain alkali (Mlc1) (Drosophila melanogaster (Fruit fly)).